Reading from the N-terminus, the 512-residue chain is uncharacterized protein (512 aa).

Helical transmembrane passes span 25–45 (GFYT…VICA), 55–75 (LLYP…PLIL), 96–116 (LVVC…VFLA), 123–143 (VVTG…LPAV), 148–168 (LLLT…LVIV), 183–203 (LLWL…FVGP), 238–258 (MTTY…SLRA), 263–283 (GSLH…SMLW), 294–314 (GLLL…MVAE), 329–349 (FLLA…WISV), 359–379 (LICV…VALG), and 386–406 (ATIW…VASL). Residues 428-512 (YRPATPNPIH…APLDAGQRIA (85 aa)) form a disordered region.

Its subcellular location is the cell membrane. This is an uncharacterized protein from Mycobacterium tuberculosis (strain CDC 1551 / Oshkosh).